Consider the following 301-residue polypeptide: Methionyl-tRNA formyltransferase (301 aa).

109-112 (SLLP) is a (6S)-5,6,7,8-tetrahydrofolate binding site.

It belongs to the Fmt family.

It carries out the reaction L-methionyl-tRNA(fMet) + (6R)-10-formyltetrahydrofolate = N-formyl-L-methionyl-tRNA(fMet) + (6S)-5,6,7,8-tetrahydrofolate + H(+). Functionally, attaches a formyl group to the free amino group of methionyl-tRNA(fMet). The formyl group appears to play a dual role in the initiator identity of N-formylmethionyl-tRNA by promoting its recognition by IF2 and preventing the misappropriation of this tRNA by the elongation apparatus. The chain is Methionyl-tRNA formyltransferase from Novosphingobium aromaticivorans (strain ATCC 700278 / DSM 12444 / CCUG 56034 / CIP 105152 / NBRC 16084 / F199).